A 188-amino-acid polypeptide reads, in one-letter code: dCTP deaminase (188 aa).

DCTP-binding positions include lysine 111–arginine 116, threonine 135–glutamate 137, glutamine 156, tyrosine 170, lysine 179, and glutamine 180. Residue glutamate 137 is the Proton donor/acceptor of the active site.

Belongs to the dCTP deaminase family. In terms of assembly, homotrimer.

It carries out the reaction dCTP + H2O + H(+) = dUTP + NH4(+). Its pathway is pyrimidine metabolism; dUMP biosynthesis; dUMP from dCTP (dUTP route): step 1/2. Functionally, catalyzes the deamination of dCTP to dUTP. The polypeptide is dCTP deaminase (Rickettsia akari (strain Hartford)).